We begin with the raw amino-acid sequence, 452 residues long: Ethanolamine kinase 1 (452 aa).

The segment at 26–64 (AVQTRIGNSAASRRSPAARPPVPAPPALPRGRPGTEGST) is disordered. The segment covering 43 to 53 (ARPPVPAPPAL) has biased composition (pro residues).

This sequence belongs to the choline/ethanolamine kinase family. As to expression, expressed in kidney, liver, placenta, heart, leukocyte, ovary and testis.

The protein localises to the cytoplasm. The catalysed reaction is ethanolamine + ATP = phosphoethanolamine + ADP + H(+). Its pathway is phospholipid metabolism; phosphatidylethanolamine biosynthesis; phosphatidylethanolamine from ethanolamine: step 1/3. In terms of biological role, highly specific for ethanolamine phosphorylation. May be a rate-controlling step in phosphatidylethanolamine biosynthesis. The protein is Ethanolamine kinase 1 of Homo sapiens (Human).